Reading from the N-terminus, the 270-residue chain is Purine nucleoside phosphorylase BT_4389 (270 aa).

Zn(2+) contacts are provided by H79, C124, and H141.

Belongs to the purine nucleoside phosphorylase YfiH/LACC1 family. Homodimer. It depends on Cu(2+) as a cofactor. The cofactor is Zn(2+).

The enzyme catalyses adenosine + phosphate = alpha-D-ribose 1-phosphate + adenine. It carries out the reaction S-methyl-5'-thioadenosine + phosphate = 5-(methylsulfanyl)-alpha-D-ribose 1-phosphate + adenine. It catalyses the reaction inosine + phosphate = alpha-D-ribose 1-phosphate + hypoxanthine. The catalysed reaction is adenosine + H2O + H(+) = inosine + NH4(+). In terms of biological role, purine nucleoside enzyme that catalyzes the phosphorolysis of adenosine and inosine nucleosides, yielding D-ribose 1-phosphate and the respective free bases, adenine and hypoxanthine. Also catalyzes the phosphorolysis of S-methyl-5'-thioadenosine into adenine and S-methyl-5-thio-alpha-D-ribose 1-phosphate. Also has adenosine deaminase activity. This is Purine nucleoside phosphorylase BT_4389 from Bacteroides thetaiotaomicron (strain ATCC 29148 / DSM 2079 / JCM 5827 / CCUG 10774 / NCTC 10582 / VPI-5482 / E50).